We begin with the raw amino-acid sequence, 475 residues long: Aspartyl/glutamyl-tRNA(Asn/Gln) amidotransferase subunit B (475 aa).

Belongs to the GatB/GatE family. GatB subfamily. Heterotrimer of A, B and C subunits.

It carries out the reaction L-glutamyl-tRNA(Gln) + L-glutamine + ATP + H2O = L-glutaminyl-tRNA(Gln) + L-glutamate + ADP + phosphate + H(+). The catalysed reaction is L-aspartyl-tRNA(Asn) + L-glutamine + ATP + H2O = L-asparaginyl-tRNA(Asn) + L-glutamate + ADP + phosphate + 2 H(+). Functionally, allows the formation of correctly charged Asn-tRNA(Asn) or Gln-tRNA(Gln) through the transamidation of misacylated Asp-tRNA(Asn) or Glu-tRNA(Gln) in organisms which lack either or both of asparaginyl-tRNA or glutaminyl-tRNA synthetases. The reaction takes place in the presence of glutamine and ATP through an activated phospho-Asp-tRNA(Asn) or phospho-Glu-tRNA(Gln). In Chlorobaculum tepidum (strain ATCC 49652 / DSM 12025 / NBRC 103806 / TLS) (Chlorobium tepidum), this protein is Aspartyl/glutamyl-tRNA(Asn/Gln) amidotransferase subunit B.